Consider the following 177-residue polypeptide: Coatomer subunit zeta-3 (177 aa).

This sequence belongs to the adaptor complexes small subunit family. Oligomeric complex that consists of at least the alpha, beta, beta', gamma, delta, epsilon and zeta subunits.

Its subcellular location is the cytoplasm. The protein localises to the golgi apparatus membrane. It localises to the cytoplasmic vesicle. It is found in the COPI-coated vesicle membrane. Functionally, the coatomer is a cytosolic protein complex that binds to dilysine motifs and reversibly associates with Golgi non-clathrin-coated vesicles, which further mediate biosynthetic protein transport from the ER, via the Golgi up to the trans Golgi network. Coatomer complex is required for budding from Golgi membranes, and is essential for the retrograde Golgi-to-ER transport of dilysine-tagged proteins. The zeta subunit may be involved in regulating the coat assembly and, hence, the rate of biosynthetic protein transport due to its association-dissociation properties with the coatomer complex. This is Coatomer subunit zeta-3 from Oryza sativa subsp. japonica (Rice).